We begin with the raw amino-acid sequence, 327 residues long: Aspartate--ammonia ligase (327 aa).

The protein belongs to the class-II aminoacyl-tRNA synthetase family. AsnA subfamily.

The protein localises to the cytoplasm. It carries out the reaction L-aspartate + NH4(+) + ATP = L-asparagine + AMP + diphosphate + H(+). Its pathway is amino-acid biosynthesis; L-asparagine biosynthesis; L-asparagine from L-aspartate (ammonia route): step 1/1. In Fusobacterium nucleatum subsp. nucleatum (strain ATCC 25586 / DSM 15643 / BCRC 10681 / CIP 101130 / JCM 8532 / KCTC 2640 / LMG 13131 / VPI 4355), this protein is Aspartate--ammonia ligase.